The following is a 1220-amino-acid chain: Plasma membrane calcium-transporting ATPase 1 (1220 aa).

At glycine 2 the chain carries N-acetylglycine. The Cytoplasmic portion of the chain corresponds to 2–105 (GDMANNSVVY…KTFLQLVWEA (104 aa)). 2 positions are modified to phosphoserine: serine 8 and serine 17. A helical membrane pass occupies residues 106–126 (LQDVTLIILEIAAIVSLGLSF). Residues 127–154 (YQPPEGDNALCGEVSVGEEEGEGETGWI) are Extracellular-facing. A helical membrane pass occupies residues 155-175 (EGAAILLSVVCVVLVTAFNDW). Topologically, residues 176 to 366 (SKEKQFRGLQ…KEKSVLQGKL (191 aa)) are cytoplasmic. Residues 297–356 (EEEKKDEKKKEKKNKKQDGAIENRNKAKAQDGEPMEMQPLKSEEGGDGDEKDKKKANLPK) form a disordered region. Basic and acidic residues-rich tracts occupy residues 312 to 327 (KQDG…KAQD) and 337 to 356 (KSEE…NLPK). Serine 338 is modified (phosphoserine). A helical membrane pass occupies residues 367 to 386 (TKLAVQIGKAGLLMSAITVI). Over 387–418 (ILVLYFLIDTFWVQKRPWLAECTPIYIQYFVK) the chain is Extracellular. A helical transmembrane segment spans residues 419–439 (FFIIGVTVLVVAVPEGLPLPV). Residues 440 to 855 (TISLAYSVNE…RNVYDSISKF (416 aa)) lie on the Cytoplasmic side of the membrane. Aspartate 475 functions as the 4-aspartylphosphate intermediate in the catalytic mechanism. Mg(2+)-binding residues include aspartate 475, threonine 477, and aspartate 797. The helical transmembrane segment at 856 to 876 (LQFQLTVNVVAVIVAFTGACI) threads the bilayer. Topologically, residues 877–882 (TQDSPL) are extracellular. A helical membrane pass occupies residues 883–903 (KAVQMLWVNLIMDTLASLALA). Residues 904–927 (TEPPTESLLLGKPYGRNKPLISRT) lie on the Cytoplasmic side of the membrane. A helical transmembrane segment spans residues 928–948 (MMKNILGHAFYQLVVVFTLLL). The Extracellular portion of the chain corresponds to 949–971 (AGEKFFDIDSGRNAPLHAPPSEH). A helical transmembrane segment spans residues 972 to 991 (YTIVFNIFVLMQLFNEINAR). Topologically, residues 992–1005 (KIHGERNVFEGIFN) are cytoplasmic. The chain crosses the membrane as a helical span at residues 1006-1027 (NAIFCTIVLGTFVVQIIIVQFA). Residues 1028–1039 (GKPFSCSELSVE) are Extracellular-facing. The helical transmembrane segment at 1040-1060 (QWLWSIFLGMGTLLWGQLIST) threads the bilayer. Topologically, residues 1061-1220 (IPTSRLKFQK…SPLHSLETSL (160 aa)) are cytoplasmic. Positions 1100–1117 (LRRWQILWFRGLNRIQTQ) are calmodulin-binding subdomain A. Phosphothreonine; by PKC is present on threonine 1116. A required for basolateral membrane targeting region spans residues 1118-1220 (IRVVNAFRSS…SPLHSLETSL (103 aa)). Residues serine 1140 and serine 1155 each carry the phosphoserine modification. The interval 1160 to 1220 (PLIDDTDAED…SPLHSLETSL (61 aa)) is disordered. The residue at position 1165 (threonine 1165) is a Phosphothreonine. Serine 1177 carries the phosphoserine; by PKA modification. Residues serine 1178 and serine 1182 each carry the phosphoserine modification. Residues 1200–1220 (MNKSATSSSPGSPLHSLETSL) are compositionally biased toward polar residues.

This sequence belongs to the cation transport ATPase (P-type) (TC 3.A.3) family. Type IIB subfamily. In terms of assembly, monomer. Dimer. Oligomer. Calmodulin binding. Interacts with PDZD11. Interacts with SLC35G1 and STIM1. Interacts with YWHAE; interacts with the monomeric and dimeric forms of the YWHAE but prefer the monomer form; this interaction inhibits calcium-transporting ATPase activity. Interacts with NPTN; this interaction stabilizes ATP2B1 and increases ATPase activity; this interaction controls T cell calcium homeostasis following T cell activation. Interacts with EPB41; regulates small intestinal calcium absorption through regulation of membrane expression of ATP2B1. Isoform B is ubiquitously expressed and is the most predominant isoform. Isoform C is expressed at much lower levels in all tissues tested, but liver, while isoform A is found only in aorta, brain and stomach.

It is found in the cell membrane. Its subcellular location is the basolateral cell membrane. It localises to the synapse. The protein localises to the presynaptic cell membrane. The protein resides in the cytoplasmic vesicle. It is found in the secretory vesicle. Its subcellular location is the synaptic vesicle membrane. The enzyme catalyses Ca(2+)(in) + ATP + H2O = Ca(2+)(out) + ADP + phosphate + H(+). Catalyzes the hydrolysis of ATP coupled with the transport of calcium from the cytoplasm to the extracellular space thereby maintaining intracellular calcium homeostasis. Plays a role in blood pressure regulation through regulation of intracellular calcium concentration and nitric oxide production leading to regulation of vascular smooth muscle cells vasoconstriction. Positively regulates bone mineralization through absorption of calcium from the intestine. Plays dual roles in osteoclast differentiation and survival by regulating RANKL-induced calcium oscillations in preosteoclasts and mediating calcium extrusion in mature osteoclasts. Regulates insulin sensitivity through calcium/calmodulin signaling pathway by regulating AKT1 activation and NOS3 activation in endothelial cells. May play a role in synaptic transmission by modulating calcium and proton dynamics at the synaptic vesicles. This chain is Plasma membrane calcium-transporting ATPase 1, found in Oryctolagus cuniculus (Rabbit).